A 220-amino-acid polypeptide reads, in one-letter code: ATP-dependent dethiobiotin synthetase BioD (220 aa).

ATP is bound at residue 11 to 16 (GVGKTF). T15 contributes to the Mg(2+) binding site. K36 is a catalytic residue. T40 lines the substrate pocket. Residues D48 and 107–110 (EGAG) each bind ATP. Mg(2+)-binding residues include D48 and E107.

It belongs to the dethiobiotin synthetase family. As to quaternary structure, homodimer. The cofactor is Mg(2+).

It is found in the cytoplasm. It catalyses the reaction (7R,8S)-7,8-diammoniononanoate + CO2 + ATP = (4R,5S)-dethiobiotin + ADP + phosphate + 3 H(+). It participates in cofactor biosynthesis; biotin biosynthesis; biotin from 7,8-diaminononanoate: step 1/2. In terms of biological role, catalyzes a mechanistically unusual reaction, the ATP-dependent insertion of CO2 between the N7 and N8 nitrogen atoms of 7,8-diaminopelargonic acid (DAPA, also called 7,8-diammoniononanoate) to form a ureido ring. This chain is ATP-dependent dethiobiotin synthetase BioD, found in Aquifex aeolicus (strain VF5).